A 316-amino-acid chain; its full sequence is Transaldolase B (316 aa).

Catalysis depends on Lys131, which acts as the Schiff-base intermediate with substrate.

Belongs to the transaldolase family. Type 1 subfamily. Homodimer.

Its subcellular location is the cytoplasm. The enzyme catalyses D-sedoheptulose 7-phosphate + D-glyceraldehyde 3-phosphate = D-erythrose 4-phosphate + beta-D-fructose 6-phosphate. The protein operates within carbohydrate degradation; pentose phosphate pathway; D-glyceraldehyde 3-phosphate and beta-D-fructose 6-phosphate from D-ribose 5-phosphate and D-xylulose 5-phosphate (non-oxidative stage): step 2/3. Transaldolase is important for the balance of metabolites in the pentose-phosphate pathway. In Pasteurella multocida (strain Pm70), this protein is Transaldolase B (talB).